The primary structure comprises 292 residues: Small ribosomal subunit biogenesis GTPase RsgA (292 aa).

The 152-residue stretch at 62–213 folds into the CP-type G domain; it reads KNSLVRPPIV…IADTPGFSSL (152 aa). Residues 111 to 114 and 156 to 164 contribute to the GTP site; these read SKMD and GQTGVGKST. Zn(2+)-binding residues include C237, C242, H244, and C250.

Belongs to the TRAFAC class YlqF/YawG GTPase family. RsgA subfamily. Monomer. Associates with 30S ribosomal subunit, binds 16S rRNA. It depends on Zn(2+) as a cofactor.

The protein localises to the cytoplasm. In terms of biological role, one of several proteins that assist in the late maturation steps of the functional core of the 30S ribosomal subunit. Helps release RbfA from mature subunits. May play a role in the assembly of ribosomal proteins into the subunit. Circularly permuted GTPase that catalyzes slow GTP hydrolysis, GTPase activity is stimulated by the 30S ribosomal subunit. The polypeptide is Small ribosomal subunit biogenesis GTPase RsgA (Streptococcus pneumoniae serotype 4 (strain ATCC BAA-334 / TIGR4)).